Here is a 165-residue protein sequence, read N- to C-terminus: Large ribosomal subunit protein uL11 (165 aa).

Position 38 is a phosphoserine (Ser38). A Glycyl lysine isopeptide (Lys-Gly) (interchain with G-Cter in SUMO2) cross-link involves residue Lys40. Lys48 is covalently cross-linked (Glycyl lysine isopeptide (Lys-Gly) (interchain with G-Cter in ubiquitin)). Lys54 carries the N6-acetyllysine modification. Residue Lys83 forms a Glycyl lysine isopeptide (Lys-Gly) (interchain with G-Cter in ubiquitin) linkage. Position 165 is a phosphoserine (Ser165).

The protein belongs to the universal ribosomal protein uL11 family. Component of the large ribosomal subunit. Mature ribosomes consist of a small (40S) and a large (60S) subunit. The 40S subunit contains about 33 different proteins and 1 molecule of RNA (18S). The 60S subunit contains about 49 different proteins and 3 molecules of RNA (28S, 5.8S and 5S). In terms of processing, ubiquitinated at Lys-48 and Lys-83 by RNF14 and RNF25 in response to ribosome collisions (ribosome stalling).

Its subcellular location is the cytoplasm. Its function is as follows. Component of the large ribosomal subunit. The ribosome is a large ribonucleoprotein complex responsible for the synthesis of proteins in the cell. Binds directly to 26S ribosomal RNA. In Chinchilla lanigera (Long-tailed chinchilla), this protein is Large ribosomal subunit protein uL11 (RPL12).